Reading from the N-terminus, the 287-residue chain is MTESDSADARLLTPADVRRLAAQLGIRPTKTLGQNFVIDPGTVRRIVRAAQVSPDDVVVEVGPGLGSLTLALLPHVRHVTAVEIDPRLAEALPGTVADHAPAYAHRLRVVTADALRITELPDPQPTALVANLPYNVAVPVVLHLLNLLPSLEHGLVMVQAEVAERLAARPGDRAYGAPSAKIAWYADVRRAGAIGRTVFWPVPNVDSGLVALRRRPAPPTKASREDVFAVVDAAFAQRRKTLRAALSSWAGSAAAAEAALRSAGVDPRSRGETLGIADFARIAEHRP.

Asparagine 35, valine 37, glycine 62, glutamate 83, aspartate 113, and asparagine 131 together coordinate S-adenosyl-L-methionine.

This sequence belongs to the class I-like SAM-binding methyltransferase superfamily. rRNA adenine N(6)-methyltransferase family. RsmA subfamily.

It is found in the cytoplasm. The enzyme catalyses adenosine(1518)/adenosine(1519) in 16S rRNA + 4 S-adenosyl-L-methionine = N(6)-dimethyladenosine(1518)/N(6)-dimethyladenosine(1519) in 16S rRNA + 4 S-adenosyl-L-homocysteine + 4 H(+). Functionally, specifically dimethylates two adjacent adenosines (A1518 and A1519) in the loop of a conserved hairpin near the 3'-end of 16S rRNA in the 30S particle. May play a critical role in biogenesis of 30S subunits. This Thermobifida fusca (strain YX) protein is Ribosomal RNA small subunit methyltransferase A.